The sequence spans 265 residues: 4-hydroxy-tetrahydrodipicolinate reductase (265 aa).

Residue 9–14 (GARGKM) participates in NAD(+) binding. Lysine 37 lines the NADP(+) pocket. NAD(+)-binding positions include 99 to 101 (GTT) and 125 to 128 (APNF). The active-site Proton donor/acceptor is the histidine 155. (S)-2,3,4,5-tetrahydrodipicolinate is bound at residue histidine 156. Lysine 159 acts as the Proton donor in catalysis. 165–166 (GT) lines the (S)-2,3,4,5-tetrahydrodipicolinate pocket.

The protein belongs to the DapB family.

The protein resides in the cytoplasm. The enzyme catalyses (S)-2,3,4,5-tetrahydrodipicolinate + NAD(+) + H2O = (2S,4S)-4-hydroxy-2,3,4,5-tetrahydrodipicolinate + NADH + H(+). It carries out the reaction (S)-2,3,4,5-tetrahydrodipicolinate + NADP(+) + H2O = (2S,4S)-4-hydroxy-2,3,4,5-tetrahydrodipicolinate + NADPH + H(+). It functions in the pathway amino-acid biosynthesis; L-lysine biosynthesis via DAP pathway; (S)-tetrahydrodipicolinate from L-aspartate: step 4/4. Catalyzes the conversion of 4-hydroxy-tetrahydrodipicolinate (HTPA) to tetrahydrodipicolinate. This Lysinibacillus sphaericus (strain C3-41) protein is 4-hydroxy-tetrahydrodipicolinate reductase.